Here is a 572-residue protein sequence, read N- to C-terminus: Proline--tRNA ligase (572 aa).

Belongs to the class-II aminoacyl-tRNA synthetase family. ProS type 1 subfamily. In terms of assembly, homodimer.

The protein localises to the cytoplasm. The catalysed reaction is tRNA(Pro) + L-proline + ATP = L-prolyl-tRNA(Pro) + AMP + diphosphate. Functionally, catalyzes the attachment of proline to tRNA(Pro) in a two-step reaction: proline is first activated by ATP to form Pro-AMP and then transferred to the acceptor end of tRNA(Pro). As ProRS can inadvertently accommodate and process non-cognate amino acids such as alanine and cysteine, to avoid such errors it has two additional distinct editing activities against alanine. One activity is designated as 'pretransfer' editing and involves the tRNA(Pro)-independent hydrolysis of activated Ala-AMP. The other activity is designated 'posttransfer' editing and involves deacylation of mischarged Ala-tRNA(Pro). The misacylated Cys-tRNA(Pro) is not edited by ProRS. This chain is Proline--tRNA ligase, found in Escherichia coli O127:H6 (strain E2348/69 / EPEC).